The primary structure comprises 246 residues: Small ribosomal subunit protein uS3 (246 aa).

Positions 19–98 (IDEWLAQNFY…NPMLDARVQA (80 aa)) constitute a KH type-2 domain. Residues 218–246 (LQEETASTLREHMEAARPGEEHEEDREES) form a disordered region. Residues 226–237 (LREHMEAARPGE) show a composition bias toward basic and acidic residues.

Belongs to the universal ribosomal protein uS3 family. In terms of assembly, part of the 30S ribosomal subunit.

In terms of biological role, binds the lower part of the 30S subunit head. The protein is Small ribosomal subunit protein uS3 of Aeropyrum pernix (strain ATCC 700893 / DSM 11879 / JCM 9820 / NBRC 100138 / K1).